Consider the following 503-residue polypeptide: Glucose-6-phosphate 1-dehydrogenase (503 aa).

Residues 14-21 (GASGDLSK), arginine 49, and lysine 158 contribute to the NADP(+) site. D-glucose 6-phosphate is bound by residues lysine 158, 188 to 192 (HYLGK), glutamate 226, and aspartate 245. The Proton acceptor role is filled by histidine 250. Residue lysine 341 participates in NADP(+) binding. Lysine 344 is a D-glucose 6-phosphate binding site. NADP(+) contacts are provided by lysine 350, arginine 354, and arginine 376. Glutamine 378 serves as a coordination point for D-glucose 6-phosphate. NADP(+) contacts are provided by residues 384–386 (YLK), arginine 471, and tyrosine 487.

It belongs to the glucose-6-phosphate dehydrogenase family.

The enzyme catalyses D-glucose 6-phosphate + NADP(+) = 6-phospho-D-glucono-1,5-lactone + NADPH + H(+). It participates in carbohydrate degradation; pentose phosphate pathway; D-ribulose 5-phosphate from D-glucose 6-phosphate (oxidative stage): step 1/3. Catalyzes the rate-limiting step of the oxidative pentose-phosphate pathway, which represents a route for the dissimilation of carbohydrates besides glycolysis. The main function of this enzyme is to provide reducing power (NADPH) and pentose phosphates for fatty acid and nucleic acid synthesis. The G6PDH activity is required to cope with hydrogen peroxide and potassium bisulfite stresses and plays a role in adaptation to conditions used in wine fermentations. This is Glucose-6-phosphate 1-dehydrogenase from Hanseniaspora uvarum (Yeast).